A 179-amino-acid polypeptide reads, in one-letter code: SCAN domain-containing protein 1 (179 aa).

Residues 1-104 form a disordered region; it reads MAATEPILAA…PGPAGSRLGP (104 aa). Residues 52-80 are compositionally biased toward low complexity; the sequence is SPNAAVPEAIPTPRAAASAALELPLGPAP. An SCAN box domain is found at 108-166; the sequence is RQRFRQFRYQDAAGPREAFRQLRELSRQWLRPDIRTKEQIVEMLVQEQLLAILPEAARA.

As to quaternary structure, interacts with ZNF202.

It is found in the nucleus. In terms of biological role, may regulate transcriptional activity. This is SCAN domain-containing protein 1 (SCAND1) from Homo sapiens (Human).